A 75-amino-acid chain; its full sequence is Small ribosomal subunit protein bS18 (75 aa).

This sequence belongs to the bacterial ribosomal protein bS18 family. In terms of assembly, part of the 30S ribosomal subunit. Forms a tight heterodimer with protein bS6.

Its function is as follows. Binds as a heterodimer with protein bS6 to the central domain of the 16S rRNA, where it helps stabilize the platform of the 30S subunit. The chain is Small ribosomal subunit protein bS18 from Thermotoga sp. (strain RQ2).